We begin with the raw amino-acid sequence, 285 residues long: uncharacterized protein (285 aa).

The ATP-grasp domain occupies 107–285 (FLTVDTTIFD…KHHLKRQMIP (179 aa)).

This is an uncharacterized protein from Mycoplasma pneumoniae (strain ATCC 29342 / M129 / Subtype 1) (Mycoplasmoides pneumoniae).